Consider the following 326-residue polypeptide: Glycerol-3-phosphate dehydrogenase [NAD(P)+] (326 aa).

Positions 15, 35, and 107 each coordinate NADPH. Residues Lys-107, Gly-135, and Ser-137 each contribute to the sn-glycerol 3-phosphate site. Ala-139 provides a ligand contact to NADPH. The sn-glycerol 3-phosphate site is built by Lys-190, Asp-243, Ser-253, Arg-254, and Asn-255. Catalysis depends on Lys-190, which acts as the Proton acceptor. Arg-254 contributes to the NADPH binding site. NADPH contacts are provided by Leu-273 and Glu-275.

The protein belongs to the NAD-dependent glycerol-3-phosphate dehydrogenase family.

Its subcellular location is the cytoplasm. It catalyses the reaction sn-glycerol 3-phosphate + NAD(+) = dihydroxyacetone phosphate + NADH + H(+). The catalysed reaction is sn-glycerol 3-phosphate + NADP(+) = dihydroxyacetone phosphate + NADPH + H(+). It participates in membrane lipid metabolism; glycerophospholipid metabolism. Its function is as follows. Catalyzes the reduction of the glycolytic intermediate dihydroxyacetone phosphate (DHAP) to sn-glycerol 3-phosphate (G3P), the key precursor for phospholipid synthesis. This is Glycerol-3-phosphate dehydrogenase [NAD(P)+] from Bradyrhizobium diazoefficiens (strain JCM 10833 / BCRC 13528 / IAM 13628 / NBRC 14792 / USDA 110).